The following is a 355-amino-acid chain: Guanine nucleotide-binding protein G(z) subunit alpha (355 aa).

Positions Met1–Arg14 are enriched in basic and acidic residues. Residues Met1–Glu26 are disordered. Residue Gly2 is the site of N-myristoyl glycine attachment. Cys3 is lipidated: S-palmitoyl cysteine. A G-alpha domain is found at Arg32–Cys355. The interval Lys35 to Thr48 is G1 motif. GTP is bound by residues Gly40–Ser47, Leu176–Thr182, Asp201–Gln205, Asn270–Asp273, and Ala327. Positions 47 and 182 each coordinate Mg(2+). A G2 motif region spans residues Asp174–Thr182. Residues Phe197–Arg206 form a G3 motif region. The segment at Ile266 to Asp273 is G4 motif. A G5 motif region spans residues Thr325 to Thr330.

The protein belongs to the G-alpha family. G(i/o/t/z) subfamily. G-proteins are composed of 3 units; alpha, beta and gamma. The alpha chain contains the guanine nucleotide binding site. Interacts with ADGRB2.

It localises to the membrane. Its function is as follows. Guanine nucleotide-binding proteins (G proteins) are involved as modulators or transducers in various transmembrane signaling systems. This is Guanine nucleotide-binding protein G(z) subunit alpha (Gnaz) from Mus musculus (Mouse).